The following is a 404-amino-acid chain: Phosphopentomutase (404 aa).

Mn(2+) contacts are provided by Asp10, Asp303, His308, Asp344, His345, and His356.

The protein belongs to the phosphopentomutase family. Mn(2+) is required as a cofactor.

The protein localises to the cytoplasm. The enzyme catalyses 2-deoxy-alpha-D-ribose 1-phosphate = 2-deoxy-D-ribose 5-phosphate. The catalysed reaction is alpha-D-ribose 1-phosphate = D-ribose 5-phosphate. The protein operates within carbohydrate degradation; 2-deoxy-D-ribose 1-phosphate degradation; D-glyceraldehyde 3-phosphate and acetaldehyde from 2-deoxy-alpha-D-ribose 1-phosphate: step 1/2. Functionally, isomerase that catalyzes the conversion of deoxy-ribose 1-phosphate (dRib-1-P) and ribose 1-phosphate (Rib-1-P) to deoxy-ribose 5-phosphate (dRib-5-P) and ribose 5-phosphate (Rib-5-P), respectively. This is Phosphopentomutase from Shewanella baltica (strain OS155 / ATCC BAA-1091).